The following is a 439-amino-acid chain: UDP-N-acetylmuramate--L-alanine ligase (439 aa).

113-119 contacts ATP; sequence GSHGKTS.

This sequence belongs to the MurCDEF family.

It localises to the cytoplasm. It catalyses the reaction UDP-N-acetyl-alpha-D-muramate + L-alanine + ATP = UDP-N-acetyl-alpha-D-muramoyl-L-alanine + ADP + phosphate + H(+). The protein operates within cell wall biogenesis; peptidoglycan biosynthesis. In terms of biological role, cell wall formation. This Lactobacillus delbrueckii subsp. bulgaricus (strain ATCC 11842 / DSM 20081 / BCRC 10696 / JCM 1002 / NBRC 13953 / NCIMB 11778 / NCTC 12712 / WDCM 00102 / Lb 14) protein is UDP-N-acetylmuramate--L-alanine ligase.